The following is a 428-amino-acid chain: GTPase Obg (428 aa).

The 158-residue stretch at 1-158 folds into the Obg domain; it reads MFVDKVKVYA…RNLLLELKVL (158 aa). The region spanning 159 to 329 is the OBG-type G domain; the sequence is ADVGLVGFPS…LMLAIADELE (171 aa). GTP-binding positions include 165–172, 190–194, 212–215, 282–285, and 310–312; these read GFPSVGKS, FTTIT, DLPG, NKMD, and SAI. Residues S172 and T192 each coordinate Mg(2+). The OCT domain occupies 350–428; it reads KHELPIEPFT…IMKFEFEFVE (79 aa).

The protein belongs to the TRAFAC class OBG-HflX-like GTPase superfamily. OBG GTPase family. In terms of assembly, monomer. Mg(2+) is required as a cofactor.

Its subcellular location is the cytoplasm. Its function is as follows. An essential GTPase which binds GTP, GDP and possibly (p)ppGpp with moderate affinity, with high nucleotide exchange rates and a fairly low GTP hydrolysis rate. Plays a role in control of the cell cycle, stress response, ribosome biogenesis and in those bacteria that undergo differentiation, in morphogenesis control. This is GTPase Obg from Shouchella clausii (strain KSM-K16) (Alkalihalobacillus clausii).